We begin with the raw amino-acid sequence, 72 residues long: Nod factor export ATP-binding protein I (72 aa).

It belongs to the ABC transporter superfamily. Lipooligosaccharide exporter (TC 3.A.1.102) family. The complex is composed of two ATP-binding proteins (NodI) and two transmembrane proteins (NodJ).

Its subcellular location is the cell inner membrane. Its function is as follows. Part of the ABC transporter complex NodIJ involved in the export of the nodulation factors (Nod factors), the bacterial signal molecules that induce symbiosis and subsequent nodulation induction. Nod factors are LCO (lipo-chitin oligosaccharide), a modified beta-1,4-linked N-acetylglucosamine oligosaccharide. This subunit is responsible for energy coupling to the transport system. This chain is Nod factor export ATP-binding protein I, found in Rhizobium leguminosarum bv. trifolii.